The chain runs to 138 residues: Small ribosomal subunit protein uS9c (138 aa).

The protein belongs to the universal ribosomal protein uS9 family.

Its subcellular location is the plastid. The protein resides in the chloroplast. This Phaeodactylum tricornutum (strain CCAP 1055/1) protein is Small ribosomal subunit protein uS9c (rps9).